The sequence spans 369 residues: Glutamate 5-kinase (369 aa).

Lysine 9 provides a ligand contact to ATP. Substrate is bound by residues serine 49, aspartate 136, and asparagine 148. ATP contacts are provided by residues 168-169 (TD) and 210-216 (TGGMLTK). The PUA domain occupies 275 to 355 (RGSVYVDEGA…KGVFIHRDDW (81 aa)).

The protein belongs to the glutamate 5-kinase family.

The protein localises to the cytoplasm. It carries out the reaction L-glutamate + ATP = L-glutamyl 5-phosphate + ADP. It participates in amino-acid biosynthesis; L-proline biosynthesis; L-glutamate 5-semialdehyde from L-glutamate: step 1/2. Functionally, catalyzes the transfer of a phosphate group to glutamate to form L-glutamate 5-phosphate. In Neisseria meningitidis serogroup C / serotype 2a (strain ATCC 700532 / DSM 15464 / FAM18), this protein is Glutamate 5-kinase.